Consider the following 76-residue polypeptide: Large ribosomal subunit protein uL29 (76 aa).

It belongs to the universal ribosomal protein uL29 family.

The protein is Large ribosomal subunit protein uL29 of Corynebacterium glutamicum (strain R).